Here is a 965-residue protein sequence, read N- to C-terminus: Glycine dehydrogenase (decarboxylating) (965 aa).

At lysine 711 the chain carries N6-(pyridoxal phosphate)lysine.

It belongs to the GcvP family. In terms of assembly, the glycine cleavage system is composed of four proteins: P, T, L and H. It depends on pyridoxal 5'-phosphate as a cofactor.

It carries out the reaction N(6)-[(R)-lipoyl]-L-lysyl-[glycine-cleavage complex H protein] + glycine + H(+) = N(6)-[(R)-S(8)-aminomethyldihydrolipoyl]-L-lysyl-[glycine-cleavage complex H protein] + CO2. Functionally, the glycine cleavage system catalyzes the degradation of glycine. The P protein binds the alpha-amino group of glycine through its pyridoxal phosphate cofactor; CO(2) is released and the remaining methylamine moiety is then transferred to the lipoamide cofactor of the H protein. In Psychrobacter cryohalolentis (strain ATCC BAA-1226 / DSM 17306 / VKM B-2378 / K5), this protein is Glycine dehydrogenase (decarboxylating).